A 329-amino-acid polypeptide reads, in one-letter code: Peroxidase 5 (329 aa).

An N-terminal signal peptide occupies residues 1–26 (MSSKRVTWLSLTWVLVFLCLSVELEA). Residue Gln27 is modified to Pyrrolidone carboxylic acid. Intrachain disulfides connect Cys37–Cys117, Cys70–Cys75, Cys123–Cys324, and Cys202–Cys234. The active-site Proton acceptor is the His68. Asp69, Val72, Gly74, Asp76, and Ser78 together coordinate Ca(2+). Substrate is bound at residue Pro165. Residue His195 participates in heme b binding. Thr196 contributes to the Ca(2+) binding site. N-linked (GlcNAc...) asparagine glycosylation is present at Asn213. 2 residues coordinate Ca(2+): Ser251 and Asp256.

Belongs to the peroxidase family. Classical plant (class III) peroxidase subfamily. It depends on heme b as a cofactor. Ca(2+) is required as a cofactor.

Its subcellular location is the secreted. It catalyses the reaction 2 a phenolic donor + H2O2 = 2 a phenolic radical donor + 2 H2O. Functionally, removal of H(2)O(2), oxidation of toxic reductants, biosynthesis and degradation of lignin, suberization, auxin catabolism, response to environmental stresses such as wounding, pathogen attack and oxidative stress. These functions might be dependent on each isozyme/isoform in each plant tissue. The protein is Peroxidase 5 of Vitis vinifera (Grape).